A 46-amino-acid polypeptide reads, in one-letter code: Cysteine-rich venom protein asurin-1 (46 aa).

It belongs to the CRISP family. Contains 8 disulfide bonds. In terms of tissue distribution, expressed by the venom gland.

The protein resides in the secreted. Functionally, blocks contraction of smooth muscle elicited by high potassium-induced depolarization, but does not block caffeine-stimulated contraction. May target voltage-gated calcium channels on smooth muscle. This is Cysteine-rich venom protein asurin-1 from Austrelaps superbus (Lowland copperhead snake).